The primary structure comprises 313 residues: 2-phosphoglycerate kinase (313 aa).

Positions 8–95 constitute an ATP-cone domain; that stretch reads SRILVTDKEY…LWRRVLKKHS (88 aa).

The protein belongs to the 2-phosphoglycerate kinase family. A divalent metal cation serves as cofactor.

It catalyses the reaction (2R)-2-phosphoglycerate + ATP = (2R)-2,3-bisphosphoglycerate + ADP + H(+). Its pathway is thermoadapter biosynthesis; cyclic 2,3-diphosphoglycerate biosynthesis; cyclic 2,3-diphosphoglycerate from 2-phospho-D-glycerate: step 1/2. Its function is as follows. Catalyzes the phosphorylation of 2-phosphoglycerate to 2,3-diphosphoglycerate. Involved in the biosynthesis of cyclic 2,3-bisphosphoglycerate, a thermoprotectant. The chain is 2-phosphoglycerate kinase from Methanococcus maripaludis (strain C6 / ATCC BAA-1332).